The chain runs to 684 residues: 1,4-alpha-glucan-branching enzyme (684 aa).

W88 and K123 together coordinate (1,4-alpha-D-glucosyl)n. D340 (nucleophile) is an active-site residue. E395 serves as the catalytic Proton donor.

It belongs to the glycosyl hydrolase 13 family. GlgB subfamily.

The protein resides in the cytoplasm. It catalyses the reaction Transfers a segment of a (1-&gt;4)-alpha-D-glucan chain to a primary hydroxy group in a similar glucan chain.. It participates in glycan biosynthesis; glycogen biosynthesis. Functionally, glycogen-branching enzyme participates in the glycogen biosynthetic process along with glycogenin and glycogen synthase. Generates alpha-1,6-glucosidic branches from alpha-1,4-linked glucose chains, to increase solubility of the glycogen polymer. This chain is 1,4-alpha-glucan-branching enzyme (be1), found in Emericella nidulans (strain FGSC A4 / ATCC 38163 / CBS 112.46 / NRRL 194 / M139) (Aspergillus nidulans).